Consider the following 336-residue polypeptide: MRAAVVTKDHKVSIEDKKLRALKPGEALVQTEYCGVCHTDLHVKNADFGDVTGVTLGHEGIGKVIEVAEDVESLKIGDRVSIAWMFESCGRCEYCTTGRETLCRSVKNAGYTVDGAMAEQVIVTADYAVKVPEKLDPAAASSITCAGVTTYKAVKVSNVKPGQWLGVFGIGGLGNLALQYAKNVMGAKIVAFDINDDKLAFAKELGADAIINSKDVDPVAEVMKLTDNKGLDATVVTSVAKTPFNQAVDVVKAGARVVAVGLPVDKMNLDIPRLVLDGIEVVGSLVGTRQDLREAFEFAAENKVTPKVQLRKLEEINDIFEEMEKGTITGRMVIKF.

Positions 37, 58, 89, 92, 95, 103, and 145 each coordinate Zn(2+).

Belongs to the zinc-containing alcohol dehydrogenase family. The cofactor is Zn(2+).

The enzyme catalyses a primary alcohol + NAD(+) = an aldehyde + NADH + H(+). The catalysed reaction is a secondary alcohol + NAD(+) = a ketone + NADH + H(+). The chain is Alcohol dehydrogenase (adh) from Staphylococcus aureus (strain Mu50 / ATCC 700699).